The chain runs to 515 residues: Galactose-1-phosphate uridylyltransferase (515 aa).

The protein belongs to the galactose-1-phosphate uridylyltransferase type 2 family.

Its subcellular location is the cytoplasm. The enzyme catalyses alpha-D-galactose 1-phosphate + UDP-alpha-D-glucose = alpha-D-glucose 1-phosphate + UDP-alpha-D-galactose. The protein operates within carbohydrate metabolism; galactose metabolism. Transfers the UMP unit from UDP-glucose (UDP-Glc) to Gal1P. Can also transfer the UMP unit to GlcNAc1P and GalNAc1P. Involved in the general galactose metabolism, and also involved in the lacto-N-biose I/galacto-N-biose (LNB/GNB) degradation pathway, which is important for host intestinal colonization by bifidobacteria. This chain is Galactose-1-phosphate uridylyltransferase, found in Bifidobacterium longum subsp. longum (strain ATCC 15707 / DSM 20219 / JCM 1217 / NCTC 11818 / E194b).